The sequence spans 658 residues: UvrABC system protein B (658 aa).

Residues 26-414 (AGLKKGLKHQ…PDVIEQIIRP (389 aa)) enclose the Helicase ATP-binding domain. 39-46 (GATGTGKT) contributes to the ATP binding site. Residues 92–115 (YYDYYQPEAYVPQSDTYIEKDASI) carry the Beta-hairpin motif. Positions 430-592 (QIDDLMDEIN…ITPKTIKKEI (163 aa)) constitute a Helicase C-terminal domain. One can recognise a UVR domain in the interval 622-658 (DVFIEGMEHEMKEAAKALDFERAAELRDALLEIKAEG).

Belongs to the UvrB family. As to quaternary structure, forms a heterotetramer with UvrA during the search for lesions. Interacts with UvrC in an incision complex.

It is found in the cytoplasm. Functionally, the UvrABC repair system catalyzes the recognition and processing of DNA lesions. A damage recognition complex composed of 2 UvrA and 2 UvrB subunits scans DNA for abnormalities. Upon binding of the UvrA(2)B(2) complex to a putative damaged site, the DNA wraps around one UvrB monomer. DNA wrap is dependent on ATP binding by UvrB and probably causes local melting of the DNA helix, facilitating insertion of UvrB beta-hairpin between the DNA strands. Then UvrB probes one DNA strand for the presence of a lesion. If a lesion is found the UvrA subunits dissociate and the UvrB-DNA preincision complex is formed. This complex is subsequently bound by UvrC and the second UvrB is released. If no lesion is found, the DNA wraps around the other UvrB subunit that will check the other stand for damage. This chain is UvrABC system protein B, found in Listeria monocytogenes serotype 4b (strain F2365).